The sequence spans 229 residues: Probable methylthioribulose-1-phosphate dehydratase (229 aa).

Cys-97 contacts substrate. Zn(2+) is bound by residues His-115 and His-117. The active-site Proton donor/acceptor is the Glu-139. His-195 provides a ligand contact to Zn(2+).

It belongs to the aldolase class II family. MtnB subfamily. The cofactor is Zn(2+).

The protein localises to the cytoplasm. It carries out the reaction 5-(methylsulfanyl)-D-ribulose 1-phosphate = 5-methylsulfanyl-2,3-dioxopentyl phosphate + H2O. The protein operates within amino-acid biosynthesis; L-methionine biosynthesis via salvage pathway; L-methionine from S-methyl-5-thio-alpha-D-ribose 1-phosphate: step 2/6. Catalyzes the dehydration of methylthioribulose-1-phosphate (MTRu-1-P) into 2,3-diketo-5-methylthiopentyl-1-phosphate (DK-MTP-1-P). This is Probable methylthioribulose-1-phosphate dehydratase from Acyrthosiphon pisum (Pea aphid).